The sequence spans 466 residues: MEALKTATFSPMSVLSEKRSEPRKPFSLPNLFPPKSQRPISQESFLKRFNGGLALLTSVLSSATAPAKSLTYEEALQQSMTTSSSFDSDGLIEGISNFVTDNPLVIAGGVAALAVPFVLSQVLNKKPKSWGVESAKNAYTKLGTDDNAQLLDIRATADFRQVGSPNIKGLGKKAVSTVYNGEDKPGFLKKLSLKFKDPENTTLYILDKFDGNSELVAELVALNGFKSAYAIKDGAEGPRGWLNSSLPWIEPKKTLSLDLSSLTDSISGVFGESSDGVSVALGVAAAAGLSVFAFTEIETILQLLGSAALVQLAGKKLLFAEDRKQTLKQVDEFLNTKVAPKELVDELKEIGKALLPQSTSNKALPAPATVTAEAESATATTTTVDKPVPEPETVAATTTTVDKPVPEPEPVPEPVPVPAIEAAVAAQVITEPTETEAKPKPHSRPLSPYASYPDLKPPSSPMPSQP.

The N-terminal 15 residues, 1 to 15, are a transit peptide targeting the chloroplast; it reads MEALKTATFSPMSVL. Residues 1–35 are disordered; sequence MEALKTATFSPMSVLSEKRSEPRKPFSLPNLFPPK. Residues 16-69 constitute a thylakoid transit peptide; it reads SEKRSEPRKPFSLPNLFPPKSQRPISQESFLKRFNGGLALLTSVLSSATAPAKS. Residues 103-123 form a helical membrane-spanning segment; the sequence is PLVIAGGVAALAVPFVLSQVL. Positions 144–250 constitute a Rhodanese domain; the sequence is TDDNAQLLDI…WLNSSLPWIE (107 aa). The chain crosses the membrane as a helical span at residues 277-297; it reads VSVALGVAAAAGLSVFAFTEI. Residues 373 to 384 are compositionally biased toward low complexity; the sequence is EAESATATTTTV. Disordered stretches follow at residues 373 to 392 and 426 to 466; these read EAES…PEPE and AQVI…PSQP. Residues 455 to 466 are compositionally biased toward pro residues; that stretch reads LKPPSSPMPSQP.

As to quaternary structure, component of high molecular weight thylakoid LFNRs-containing protein complexes containing LIR1, LFNR1, LFNR2, TIC62 and TROL proteins. As to expression, expressed in leaves and stems, and at lower levels in flowers and siliques (at protein level).

The protein localises to the plastid. It is found in the chloroplast envelope. Its subcellular location is the chloroplast thylakoid membrane. In terms of biological role, rhodanese domain-containing protein required for anchoring ferredoxin--NADP reductase to the thylakoid membranes and sustaining efficient linear electron flow (LEF). This chain is Rhodanese-like domain-containing protein 4, chloroplastic, found in Arabidopsis thaliana (Mouse-ear cress).